The chain runs to 651 residues: Probable replication restart protein PriA (651 aa).

Zn(2+) is bound by residues Cys371, Cys374, Cys380, Cys383, Cys399, Cys402, Cys411, and Cys414.

Belongs to the helicase family. PriA subfamily. Component of the replication restart primosome. Zn(2+) serves as cofactor.

In terms of biological role, initiates the restart of stalled replication forks, which reloads the replicative helicase on sites other than the origin of replication. Recognizes and binds to abandoned replication forks and remodels them to uncover a helicase loading site. Promotes assembly of the primosome at these replication forks. The protein is Probable replication restart protein PriA of Mycobacterium leprae (strain TN).